A 370-amino-acid chain; its full sequence is Alpha-ketoglutarate-dependent xanthine dioxygenase xanA (370 aa).

Residue His-107 coordinates substrate. Residues His-149 and Asp-151 each coordinate Fe cation. Positions 195 and 325 each coordinate 2-oxoglutarate. Fe cation is bound at residue His-340. Position 352 (Arg-352) interacts with 2-oxoglutarate.

The protein belongs to the TfdA dioxygenase family. It depends on Fe(2+) as a cofactor. Post-translationally, glycosylated. Is subject to both N- and O-linked glycosylation. Phosphorylated.

It localises to the cytoplasm. It is found in the cytosol. The catalysed reaction is xanthine + 2-oxoglutarate + O2 = urate + succinate + CO2. Its activity is regulated as follows. Cu(2+) and Zn(2+) completely inhibit the xanthine dioxygenase activity, whereas Co(2+), Mn(2+), and Ni(2+) partially inhibit the activity. The inactive metal ions are presumed to compete for the Fe(2+)-binding site. N-oxalylglycine (NOG), a known inhibitor of several Fe(2+)/alpha-ketoglutarate-dependent dioxygenase family members, competes with alpha-ketoglutarate and provides a Ki of 0.12 uM for inhibition. 6,8-dihydroxypurine acts as a slow-binding competitive inhibitor. The thiol-specific inhibitors 5,5'-dithiobis(2-nitrobenzoic acid) (DTNB) and iodoacetamide, inhibit also the catalytic activity. Its function is as follows. Alpha-ketoglutarate-dependent xanthine dioxygenase is a non-heme mononuclear Fe(2+) enzyme that decarboxylates alpha-ketoglutarate to succinate and CO(2) while hydroxylating xanthine to generate uric acid. Allows xanthine utilization as a nitrogen source. Whereas xanA is highly specific for xanthine, alpha-ketoadipic acid can replace alpha-ketoglutarate as a cosubstrate. Exhibits ferroxidase activity in the absence of substrates. The polypeptide is Alpha-ketoglutarate-dependent xanthine dioxygenase xanA (Emericella nidulans (Aspergillus nidulans)).